The chain runs to 190 residues: Threonylcarbamoyl-AMP synthase (190 aa).

The YrdC-like domain occupies 7–190 (SEAVAHAVAV…ALTGELFRQG (184 aa)).

Belongs to the SUA5 family. TsaC subfamily.

It localises to the cytoplasm. It carries out the reaction L-threonine + hydrogencarbonate + ATP = L-threonylcarbamoyladenylate + diphosphate + H2O. Functionally, required for the formation of a threonylcarbamoyl group on adenosine at position 37 (t(6)A37) in tRNAs that read codons beginning with adenine. Catalyzes the conversion of L-threonine, HCO(3)(-)/CO(2) and ATP to give threonylcarbamoyl-AMP (TC-AMP) as the acyladenylate intermediate, with the release of diphosphate. This chain is Threonylcarbamoyl-AMP synthase, found in Klebsiella pneumoniae subsp. pneumoniae (strain ATCC 700721 / MGH 78578).